A 68-amino-acid chain; its full sequence is UPF0434 protein BTH_I0741 (68 aa).

This sequence belongs to the UPF0434 family.

The protein is UPF0434 protein BTH_I0741 of Burkholderia thailandensis (strain ATCC 700388 / DSM 13276 / CCUG 48851 / CIP 106301 / E264).